The chain runs to 369 residues: Anhydro-N-acetylmuramic acid kinase (369 aa).

12–19 lines the ATP pocket; sequence GTSLDGVD.

Belongs to the anhydro-N-acetylmuramic acid kinase family.

The enzyme catalyses 1,6-anhydro-N-acetyl-beta-muramate + ATP + H2O = N-acetyl-D-muramate 6-phosphate + ADP + H(+). It functions in the pathway amino-sugar metabolism; 1,6-anhydro-N-acetylmuramate degradation. Its pathway is cell wall biogenesis; peptidoglycan recycling. Its function is as follows. Catalyzes the specific phosphorylation of 1,6-anhydro-N-acetylmuramic acid (anhMurNAc) with the simultaneous cleavage of the 1,6-anhydro ring, generating MurNAc-6-P. Is required for the utilization of anhMurNAc either imported from the medium or derived from its own cell wall murein, and thus plays a role in cell wall recycling. In Escherichia coli O139:H28 (strain E24377A / ETEC), this protein is Anhydro-N-acetylmuramic acid kinase.